The following is a 405-amino-acid chain: L-rhamnonate dehydratase (405 aa).

Substrate-binding residues include histidine 33 and arginine 59. The Mg(2+) site is built by aspartate 226, glutamate 252, and glutamate 280. Histidine 329 serves as the catalytic Proton acceptor. Position 349 (glutamate 349) interacts with substrate.

This sequence belongs to the mandelate racemase/muconate lactonizing enzyme family. RhamD subfamily. Homooctamer; tetramer of dimers. Requires Mg(2+) as cofactor.

The enzyme catalyses L-rhamnonate = 2-dehydro-3-deoxy-L-rhamnonate + H2O. Catalyzes the dehydration of L-rhamnonate to 2-keto-3-deoxy-L-rhamnonate (KDR). This chain is L-rhamnonate dehydratase, found in Escherichia coli (strain SMS-3-5 / SECEC).